Here is a 105-residue protein sequence, read N- to C-terminus: UPF0166 protein aq_450 (105 aa).

It belongs to the UPF0166 family.

In Aquifex aeolicus (strain VF5), this protein is UPF0166 protein aq_450.